The chain runs to 598 residues: Elongation factor 4 (598 aa).

The tr-type G domain occupies K4–Q181. Residues D16–T21 and N128–D131 each bind GTP.

It belongs to the TRAFAC class translation factor GTPase superfamily. Classic translation factor GTPase family. LepA subfamily.

The protein resides in the cell membrane. The enzyme catalyses GTP + H2O = GDP + phosphate + H(+). Functionally, required for accurate and efficient protein synthesis under certain stress conditions. May act as a fidelity factor of the translation reaction, by catalyzing a one-codon backward translocation of tRNAs on improperly translocated ribosomes. Back-translocation proceeds from a post-translocation (POST) complex to a pre-translocation (PRE) complex, thus giving elongation factor G a second chance to translocate the tRNAs correctly. Binds to ribosomes in a GTP-dependent manner. The chain is Elongation factor 4 from Mesomycoplasma hyopneumoniae (strain 232) (Mycoplasma hyopneumoniae).